The sequence spans 191 residues: Ion-translocating oxidoreductase complex subunit B (191 aa).

The segment at 1 to 26 is hydrophobic; sequence MSSLWIAIAAVSAIALVSGLILGFAA. In terms of domain architecture, 4Fe-4S spans 32–90; the sequence is EADPIVERIDALLPQSQCGQCGYPGCRPYAEAVANGEKINRCAPGGEAVMRNIAALLAV. The [4Fe-4S] cluster site is built by C49, C52, C57, C73, C116, C119, C122, C126, C146, C149, C152, and C156. 2 4Fe-4S ferredoxin-type domains span residues 107–136 and 137–166; these read QVAL…GATR and ALHT…LVPV.

The protein belongs to the 4Fe4S bacterial-type ferredoxin family. RnfB subfamily. The complex is composed of six subunits: RnfA, RnfB, RnfC, RnfD, RnfE and RnfG. It depends on [4Fe-4S] cluster as a cofactor.

The protein localises to the cell inner membrane. Part of a membrane-bound complex that couples electron transfer with translocation of ions across the membrane. This is Ion-translocating oxidoreductase complex subunit B from Edwardsiella ictaluri (strain 93-146).